The following is a 155-amino-acid chain: Large ribosomal subunit protein uL13 (155 aa).

Belongs to the universal ribosomal protein uL13 family. As to quaternary structure, part of the 50S ribosomal subunit.

Its function is as follows. This protein is one of the early assembly proteins of the 50S ribosomal subunit, although it is not seen to bind rRNA by itself. It is important during the early stages of 50S assembly. The chain is Large ribosomal subunit protein uL13 from Rickettsia conorii (strain ATCC VR-613 / Malish 7).